Here is a 391-residue protein sequence, read N- to C-terminus: F-box/kelch-repeat protein At3g16740 (391 aa).

The F-box domain occupies 1–47 (MVQISDLPRDLTEEVLSRIPVTSMRAVRFTCKKWNTLSKDRSFTKKH). 2 Kelch repeats span residues 104–154 (KIFH…YEEK) and 163–215 (ILRF…LKGN).

As to quaternary structure, part of a SCF (ASK-cullin-F-box) protein ligase complex. Interacts with ASK11.

The protein resides in the nucleus. The protein operates within protein modification; protein ubiquitination. In terms of biological role, component of SCF(ASK-cullin-F-box) E3 ubiquitin ligase complexes, which may mediate the ubiquitination and subsequent proteasomal degradation of target proteins. The polypeptide is F-box/kelch-repeat protein At3g16740 (Arabidopsis thaliana (Mouse-ear cress)).